Consider the following 611-residue polypeptide: Creatine transporter (611 aa).

The chain crosses the membrane as a helical span at residues 45–65 (FIMSCVGFAVGLGNVWRFPYL). The Extracellular portion of the chain corresponds to 66-71 (CYKNGG). Residues 72 to 92 (GVFLIPYLLVAVFGGIPIFFL) form a helical membrane-spanning segment. Topologically, residues 93–122 (EISLGQFMKAGGINAWNIAPLFKGLGYASM) are cytoplasmic. Residues 123 to 143 (VIVFFCNTYYILVLTWSSFYL) form a helical membrane-spanning segment. The Extracellular portion of the chain corresponds to 144 to 207 (VQSFSSPLPW…LSSGLGDVGE (64 aa)). N-linked (GlcNAc...) asparagine glycosylation is found at N157 and N171. The chain crosses the membrane as a helical span at residues 208 to 228 (IGWELTLCLTATWMLVYFCIW). The Cytoplasmic portion of the chain corresponds to 229–246 (KGVKTSGKVVYVTATFPY). The chain crosses the membrane as a helical span at residues 247–267 (IILVILLVRGVTLHGAVQGIV). Over 268 to 281 (YYLQPDWGKLGEAQ) the chain is Extracellular. Residues 282–302 (VWIDAGTQIFFSYAIGLGTLT) traverse the membrane as a helical segment. At 303–318 (ALGSYNQLHNDCYKDA) the chain is on the cytoplasmic side. A helical membrane pass occupies residues 319 to 339 (FILSLVNSATSFFAGLVVFSI). Over 340–371 (LGFMAVEEGVDISVVAESGPGLAFIAYPKAVT) the chain is Extracellular. A helical transmembrane segment spans residues 372–392 (LMPFPQVWAVLFFIMLLCLGL). Residues 393 to 421 (GSQFVGVEGFVTAILDLWPSKFSFRYLRE) are Cytoplasmic-facing. Residues 422–442 (VVVAMVICLSFLIDLSMITEG) traverse the membrane as a helical segment. Topologically, residues 443 to 456 (GMYIFQIFDYYSAS) are extracellular. The chain crosses the membrane as a helical span at residues 457-477 (GTTLLWTAFWECVAVAWVYGG). Residues 478 to 497 (DRYLDDLAWMLGYRPWALVK) are Cytoplasmic-facing. A helical membrane pass occupies residues 498–518 (WCWSVITPLVCMGIFTFHLVN). The Extracellular segment spans residues 519–537 (YKPLTYNKTYTYPWWGEAI). A glycan (N-linked (GlcNAc...) asparagine) is linked at N525. Residues 538–558 (GWCLALASMLCVPTTVLYSLS) form a helical membrane-spanning segment. Over 559 to 611 (RGRGSLKERWRKLTTPVWASHHLAYKMAGAKINQPCEGVVSCEEKVVIFESVL) the chain is Cytoplasmic.

Belongs to the sodium:neurotransmitter symporter (SNF) (TC 2.A.22) family.

The protein localises to the membrane. Required for the uptake of creatine. This Torpedo marmorata (Marbled electric ray) protein is Creatine transporter.